The chain runs to 119 residues: Basic phospholipase A2 (119 aa).

Cystine bridges form between C11-C71, C27-C118, C29-C45, C44-C99, C51-C92, C60-C85, and C78-C90. Ca(2+) contacts are provided by Y28, G30, and G32. Residue H48 is part of the active site. D49 is a binding site for Ca(2+). D93 is a catalytic residue.

This sequence belongs to the phospholipase A2 family. Group I subfamily. D49 sub-subfamily. It depends on Ca(2+) as a cofactor. In terms of tissue distribution, expressed by the venom gland.

The protein localises to the secreted. The enzyme catalyses a 1,2-diacyl-sn-glycero-3-phosphocholine + H2O = a 1-acyl-sn-glycero-3-phosphocholine + a fatty acid + H(+). Its function is as follows. Snake venom phospholipase A2 (PLA2) that has several activities. It is myotoxic, has weak anticoagulant activity and inhibits neuromuscular transmission by blocking acetylcholine release from the nerve termini. PLA2 catalyzes the calcium-dependent hydrolysis of the 2-acyl groups in 3-sn-phosphoglycerides. The polypeptide is Basic phospholipase A2 (Hydrophis schistosus (Beaked sea snake)).